The following is a 228-amino-acid chain: uncharacterized protein (228 aa).

A signal peptide spans 1–19; that stretch reads MYRYTWLLWWITILLRIQQ. N-linked (GlcNAc...) asparagine; by host glycans are attached at residues Asn41, Asn93, Asn100, Asn128, and Asn164. A helical membrane pass occupies residues 189-209; sequence MWIIPLVIVTTIIVLICFKFP.

It belongs to the HHV-5 UL9 family.

The protein resides in the host membrane. This is an uncharacterized protein from Homo sapiens (Human).